Consider the following 1368-residue polypeptide: DNA-directed RNA polymerase subunit beta (1368 aa).

The protein belongs to the RNA polymerase beta chain family. The RNAP catalytic core consists of 2 alpha, 1 beta, 1 beta' and 1 omega subunit. When a sigma factor is associated with the core the holoenzyme is formed, which can initiate transcription.

The catalysed reaction is RNA(n) + a ribonucleoside 5'-triphosphate = RNA(n+1) + diphosphate. Functionally, DNA-dependent RNA polymerase catalyzes the transcription of DNA into RNA using the four ribonucleoside triphosphates as substrates. In Syntrophotalea carbinolica (strain DSM 2380 / NBRC 103641 / GraBd1) (Pelobacter carbinolicus), this protein is DNA-directed RNA polymerase subunit beta.